A 239-amino-acid chain; its full sequence is Skn-1 dependent zygotic transcript 1 protein (239 aa).

In terms of tissue distribution, expressed in mesendodermal precursor cells of embryos.

In terms of biological role, may have a role in mesendoderm development during embryogenesis. The polypeptide is Skn-1 dependent zygotic transcript 1 protein (sdz-1) (Caenorhabditis elegans).